A 343-amino-acid chain; its full sequence is Serine/threonine-protein kinase SRK2C (343 aa).

Residues 4–260 (YEIVKDIGSG…IEEIKNHSWF (257 aa)) enclose the Protein kinase domain. ATP-binding positions include 10-18 (IGSGNFGVA) and Lys-33. Asp-123 functions as the Proton acceptor in the catalytic mechanism. Thr-158 carries the phosphothreonine modification.

This sequence belongs to the protein kinase superfamily. Ser/Thr protein kinase family. As to quaternary structure, interacts with I-2 and TOPP1. As to expression, expressed in seedlings.

The enzyme catalyses L-seryl-[protein] + ATP = O-phospho-L-seryl-[protein] + ADP + H(+). It carries out the reaction L-threonyl-[protein] + ATP = O-phospho-L-threonyl-[protein] + ADP + H(+). Involved in gene regulation and confers tolerance to drought and osmotic stress. This chain is Serine/threonine-protein kinase SRK2C (SRK2C), found in Arabidopsis thaliana (Mouse-ear cress).